A 130-amino-acid polypeptide reads, in one-letter code: MLVTITCFGLNQACIKNHVVILNLLAPGRILEYHCYSNVDDLGVKRLDFNATPFTIKFHDEIPNLTKWNCILRQGPNNSMEYSYDVEVYKAGPRLIPRCGQLRAWAARIDGIYFARKYNTPLKRVLFWNK.

N-linked (GlcNAc...) asparagine glycans are attached at residues asparagine 64 and asparagine 77.

It belongs to the plant self-incompatibility (S1) protein family.

Its subcellular location is the secreted. This chain is S-protein homolog 30, found in Arabidopsis thaliana (Mouse-ear cress).